A 373-amino-acid polypeptide reads, in one-letter code: sn-glycerol-3-phosphate import ATP-binding protein UgpC 2 (373 aa).

The region spanning 4 to 234 is the ABC transporter domain; sequence IDIRQVRKSY…PASTFVASFI (231 aa). 36–43 serves as a coordination point for ATP; it reads GPSGCGKS.

Belongs to the ABC transporter superfamily. sn-glycerol-3-phosphate importer (TC 3.A.1.1.3) family. In terms of assembly, the complex is composed of two ATP-binding proteins (UgpC), two transmembrane proteins (UgpA and UgpE) and a solute-binding protein (UgpB).

The protein localises to the cell inner membrane. The enzyme catalyses sn-glycerol 3-phosphate(out) + ATP + H2O = sn-glycerol 3-phosphate(in) + ADP + phosphate + H(+). In terms of biological role, part of the ABC transporter complex UgpBAEC involved in sn-glycerol-3-phosphate (G3P) import. Responsible for energy coupling to the transport system. The protein is sn-glycerol-3-phosphate import ATP-binding protein UgpC 2 of Agrobacterium fabrum (strain C58 / ATCC 33970) (Agrobacterium tumefaciens (strain C58)).